Here is a 223-residue protein sequence, read N- to C-terminus: Proteasome subunit beta type-1 (223 aa).

It belongs to the peptidase T1B family. In terms of assembly, component of the 20S core complex of the 26S proteasome. The 26S proteasome is composed of a core protease (CP), known as the 20S proteasome, capped at one or both ends by the 19S regulatory particle (RP/PA700). The 20S proteasome core is composed of 28 subunits that are arranged in four stacked rings, resulting in a barrel-shaped structure. The two end rings are each formed by seven alpha subunits, and the two central rings are each formed by seven beta subunits. The catalytic chamber with the active sites is on the inside of the barrel. Present in all tissues examined. Slightly lower levels in roots.

It is found in the cytoplasm. Its subcellular location is the nucleus. Functionally, non-catalytic component of the proteasome, a multicatalytic proteinase complex which is characterized by its ability to cleave peptides with Arg, Phe, Tyr, Leu, and Glu adjacent to the leaving group at neutral or slightly basic pH. The proteasome has an ATP-dependent proteolytic activity. The sequence is that of Proteasome subunit beta type-1 (PBF1) from Arabidopsis thaliana (Mouse-ear cress).